Reading from the N-terminus, the 313-residue chain is tRNA dimethylallyltransferase (313 aa).

17 to 24 (GPTASGKT) contacts ATP. 19 to 24 (TASGKT) contributes to the substrate binding site. Interaction with substrate tRNA stretches follow at residues 42–45 (DSAL), 166–170 (QRLSR), and 247–252 (RCVGYR).

Belongs to the IPP transferase family. In terms of assembly, monomer. Requires Mg(2+) as cofactor.

The catalysed reaction is adenosine(37) in tRNA + dimethylallyl diphosphate = N(6)-dimethylallyladenosine(37) in tRNA + diphosphate. Catalyzes the transfer of a dimethylallyl group onto the adenine at position 37 in tRNAs that read codons beginning with uridine, leading to the formation of N6-(dimethylallyl)adenosine (i(6)A). The sequence is that of tRNA dimethylallyltransferase from Serratia proteamaculans (strain 568).